The sequence spans 592 residues: Autophagy-related protein 22-1 (592 aa).

The next 4 membrane-spanning stretches (helical) occupy residues 31 to 51 (YGWAAEVFVVCAMGSFLPITL), 108 to 128 (TASFALYTFSLSVLVQAVIII), 143 to 163 (LLIVFAFIGSIATMLFLVVVP), and 167 to 187 (LLGGLLAIISNTCFGASFVLL). N-linked (GlcNAc...) asparagine glycosylation occurs at asparagine 213. 8 helical membrane passes run 271–291 (IGIGYIGAVILQVISILVVVV), 301–321 (LVLFLIGLWWFVFTIPASLWL), 364–384 (IVIFLAAWFLLSDGIATVSGT), 398–418 (AALGLINVIVMLAGVFGAFSW), 433–453 (IIACIILFELIPLYGLLGFIP), 468–490 (MYPLGALYGLVMGGLSSYCRSFF), 502–524 (FYALYAITDKGSSIFGPAIVGAI), and 534–554 (AFVFLAVLIFVPLPLMLLVDV). The segment at 572 to 592 (PQGSEYGAISDDQTTEDPIEE) is disordered.

It belongs to the ATG22 family.

The protein localises to the vacuole membrane. Vacuolar effluxer which mediate the efflux of amino acids resulting from autophagic degradation. The release of autophagic amino acids allows the maintenance of protein synthesis and viability during nitrogen starvation. The polypeptide is Autophagy-related protein 22-1 (atg22-1) (Penicillium rubens (strain ATCC 28089 / DSM 1075 / NRRL 1951 / Wisconsin 54-1255) (Penicillium chrysogenum)).